We begin with the raw amino-acid sequence, 1215 residues long: DNA-directed RNA polymerase subunit beta' (1215 aa).

Cys60, Cys62, Cys75, and Cys78 together coordinate Zn(2+). Mg(2+) contacts are provided by Asp450, Asp452, and Asp454. Zn(2+) is bound by residues Cys818, Cys892, Cys899, and Cys902.

Belongs to the RNA polymerase beta' chain family. The RNAP catalytic core consists of 2 alpha, 1 beta, 1 beta' and 1 omega subunit. When a sigma factor is associated with the core the holoenzyme is formed, which can initiate transcription. Mg(2+) is required as a cofactor. Requires Zn(2+) as cofactor.

It carries out the reaction RNA(n) + a ribonucleoside 5'-triphosphate = RNA(n+1) + diphosphate. DNA-dependent RNA polymerase catalyzes the transcription of DNA into RNA using the four ribonucleoside triphosphates as substrates. The chain is DNA-directed RNA polymerase subunit beta' from Streptococcus sanguinis (strain SK36).